Here is a 104-residue protein sequence, read N- to C-terminus: uncharacterized protein (104 aa).

Positions 1–23 (MDIHDYVELIALAFWVISVVSVG) are cleaved as a signal peptide.

This is an uncharacterized protein from Lactobacillus helveticus (Lactobacillus suntoryeus).